A 439-amino-acid chain; its full sequence is Serine hydroxymethyltransferase (439 aa).

Residues Leu-134 and 138 to 140 each bind (6S)-5,6,7,8-tetrahydrofolate; that span reads GHL. N6-(pyridoxal phosphate)lysine is present on Lys-243.

The protein belongs to the SHMT family. Homodimer. Pyridoxal 5'-phosphate serves as cofactor.

It is found in the cytoplasm. The enzyme catalyses (6R)-5,10-methylene-5,6,7,8-tetrahydrofolate + glycine + H2O = (6S)-5,6,7,8-tetrahydrofolate + L-serine. The protein operates within one-carbon metabolism; tetrahydrofolate interconversion. It participates in amino-acid biosynthesis; glycine biosynthesis; glycine from L-serine: step 1/1. Its function is as follows. Catalyzes the reversible interconversion of serine and glycine with tetrahydrofolate (THF) serving as the one-carbon carrier. This reaction serves as the major source of one-carbon groups required for the biosynthesis of purines, thymidylate, methionine, and other important biomolecules. Also exhibits THF-independent aldolase activity toward beta-hydroxyamino acids, producing glycine and aldehydes, via a retro-aldol mechanism. The protein is Serine hydroxymethyltransferase of Brucella anthropi (strain ATCC 49188 / DSM 6882 / CCUG 24695 / JCM 21032 / LMG 3331 / NBRC 15819 / NCTC 12168 / Alc 37) (Ochrobactrum anthropi).